We begin with the raw amino-acid sequence, 168 residues long: MFLMWALRLVYVLVSNGYFVKQLFARASIIGVALLLSACATVPMASVEESNTAKQFRSPEKGNSGLYIYRDSFIGKALKKDLYIDDKFIGESAPDVFFYKTIKAGEHKISTESEFSNSDLNIKTESGKNYFIRQYTKFGVFVGGANLEQVSEEEGKKAISKLNMAVSH.

Residues 23–47 (LFARASIIGVALLLSACATVPMASV) form a helical membrane-spanning segment.

The protein resides in the membrane. This is an uncharacterized protein from Haemophilus influenzae (strain ATCC 51907 / DSM 11121 / KW20 / Rd).